The primary structure comprises 306 residues: Mycothiol acetyltransferase (306 aa).

N-acetyltransferase domains are found at residues 17–163 (VARV…RPMP) and 166–306 (LALS…YRRA). Glu-48 contributes to the 1D-myo-inositol 2-(L-cysteinylamino)-2-deoxy-alpha-D-glucopyranoside binding site. 89 to 91 (IVV) contacts acetyl-CoA. 1D-myo-inositol 2-(L-cysteinylamino)-2-deoxy-alpha-D-glucopyranoside is bound by residues Glu-192, Lys-232, and Glu-239. Acetyl-CoA-binding positions include 243–245 (LGV) and 250–256 (AARGLGS). Tyr-277 provides a ligand contact to 1D-myo-inositol 2-(L-cysteinylamino)-2-deoxy-alpha-D-glucopyranoside.

This sequence belongs to the acetyltransferase family. MshD subfamily. Monomer.

It catalyses the reaction 1D-myo-inositol 2-(L-cysteinylamino)-2-deoxy-alpha-D-glucopyranoside + acetyl-CoA = mycothiol + CoA + H(+). Its function is as follows. Catalyzes the transfer of acetyl from acetyl-CoA to desacetylmycothiol (Cys-GlcN-Ins) to form mycothiol. The sequence is that of Mycothiol acetyltransferase from Clavibacter michiganensis subsp. michiganensis (strain NCPPB 382).